We begin with the raw amino-acid sequence, 151 residues long: Gene 55 protein (151 aa).

The sequence is that of Gene 55 protein (55) from Mycobacterium phage D29 (Mycobacteriophage D29).